The following is a 175-amino-acid chain: Small ribosomal subunit protein bS16 (175 aa).

Belongs to the bacterial ribosomal protein bS16 family.

This chain is Small ribosomal subunit protein bS16, found in Cytophaga hutchinsonii (strain ATCC 33406 / DSM 1761 / CIP 103989 / NBRC 15051 / NCIMB 9469 / D465).